Reading from the N-terminus, the 221-residue chain is ATP-dependent dethiobiotin synthetase BioD (221 aa).

11–16 (DVGKTF) provides a ligand contact to ATP. Thr15 provides a ligand contact to Mg(2+). Residue Lys35 is part of the active site. Thr39 serves as a coordination point for substrate. ATP is bound by residues Asp44 and 103 to 106 (EGAG). Residues Asp44 and Glu103 each coordinate Mg(2+).

Belongs to the dethiobiotin synthetase family. Homodimer. Mg(2+) serves as cofactor.

Its subcellular location is the cytoplasm. It catalyses the reaction (7R,8S)-7,8-diammoniononanoate + CO2 + ATP = (4R,5S)-dethiobiotin + ADP + phosphate + 3 H(+). Its pathway is cofactor biosynthesis; biotin biosynthesis; biotin from 7,8-diaminononanoate: step 1/2. Its function is as follows. Catalyzes a mechanistically unusual reaction, the ATP-dependent insertion of CO2 between the N7 and N8 nitrogen atoms of 7,8-diaminopelargonic acid (DAPA, also called 7,8-diammoniononanoate) to form a ureido ring. This chain is ATP-dependent dethiobiotin synthetase BioD, found in Leptospira interrogans serogroup Icterohaemorrhagiae serovar copenhageni (strain Fiocruz L1-130).